Here is a 679-residue protein sequence, read N- to C-terminus: MDTSVYSHALDIWAKADLTNLQRELDADVIEIKDKETLSLNSRKSLATETKKFKKLEPEEKLNNVNKIIKQYQREIDNLTQRSKFSEKVLFDVYEKLSEAPDPQPLLQSSLEKLGKIDDSKELKEKISYLEDKLAKYADYETLKSRLLDLEQSSAKTLAKRLTAKTQEINSTWEEKGRNWKEREADLLKQLTNVQEQNKALEAKISKNIDIEGNGNEDGDQENNQKEVSTRIAEYNLVTQELETTQARIYQLEKRNEELSGALAKATSEAEKETELHAKELKLNQLESENALLSASYEQERKSTSHAINELKEQLNSVVAESESYKSELETVRRKLNNYSDYNKIKEELSALKKIEFGVNEDDSDNDIRSEDKNDNTFESSLLSANKKLQATLAEYRSKSTAQEEERNELKKSVDQLKQQIATLKEANEKLETDLEKVENVSPHFNETASMMSGVTRQMNNRTSHKMSPTSSIIGIPEDGELSGNQSTILPIVTKQRDRFRSRNMDLEKQLRQGNSEKGKLKLEISKLKGDNTKLYERIRYLQSYNNNNAPVNQSTERIDVESQYSRVYDESLHPMANFRQNELNHYKNKKLSALEKLFSSFAKVILQNKMTRMVFLFYCIGLHGLVFMMSMYVINISGYMTPEVGIVQSAKSSSNLNGGLGGAEKVAAGVGSVHGINR.

Over 1-614 the chain is Cytoplasmic; it reads MDTSVYSHAL…VILQNKMTRM (614 aa). Coiled-coil stretches lie at residues 14 to 90 and 178 to 341; these read AKAD…EKVL and RNWK…NYSD. At Ser364 the chain carries Phosphoserine. A coiled-coil region spans residues 385–444; the sequence is ANKKLQATLAEYRSKSTAQEEERNELKKSVDQLKQQIATLKEANEKLETDLEKVENVSPH. Residues Ser450 and Ser453 each carry the phosphoserine modification. The stretch at 492–540 forms a coiled coil; sequence IVTKQRDRFRSRNMDLEKQLRQGNSEKGKLKLEISKLKGDNTKLYERIR. Ser555 carries the post-translational modification Phosphoserine. Residues 615–635 form a helical; Anchor for type IV membrane protein membrane-spanning segment; it reads VFLFYCIGLHGLVFMMSMYVI. At 636-679 the chain is on the lumenal side; it reads NISGYMTPEVGIVQSAKSSSNLNGGLGGAEKVAAGVGSVHGINR.

It belongs to the CASP family.

It is found in the golgi apparatus membrane. Its function is as follows. May be involved in intra-Golgi transport. The sequence is that of Protein CASP (COY1) from Saccharomyces cerevisiae (strain ATCC 204508 / S288c) (Baker's yeast).